A 535-amino-acid polypeptide reads, in one-letter code: UDP-N-acetylmuramoyl-L-alanyl-D-glutamate--2,6-diaminopimelate ligase (535 aa).

Position 67 (Leu67) interacts with UDP-N-acetyl-alpha-D-muramoyl-L-alanyl-D-glutamate. 153-159 lines the ATP pocket; that stretch reads GTSGKTT. UDP-N-acetyl-alpha-D-muramoyl-L-alanyl-D-glutamate-binding positions include 195–196, Ser222, and Arg230; that span reads TT. Lys262 is subject to N6-carboxylysine. Meso-2,6-diaminopimelate is bound by residues Arg424, 448-451, Gly502, and Glu506; that span reads DNPR. Positions 448-451 match the Meso-diaminopimelate recognition motif motif; sequence DNPR.

Belongs to the MurCDEF family. MurE subfamily. Requires Mg(2+) as cofactor. In terms of processing, carboxylation is probably crucial for Mg(2+) binding and, consequently, for the gamma-phosphate positioning of ATP.

The protein resides in the cytoplasm. It catalyses the reaction UDP-N-acetyl-alpha-D-muramoyl-L-alanyl-D-glutamate + meso-2,6-diaminopimelate + ATP = UDP-N-acetyl-alpha-D-muramoyl-L-alanyl-gamma-D-glutamyl-meso-2,6-diaminopimelate + ADP + phosphate + H(+). Its pathway is cell wall biogenesis; peptidoglycan biosynthesis. Functionally, catalyzes the addition of meso-diaminopimelic acid to the nucleotide precursor UDP-N-acetylmuramoyl-L-alanyl-D-glutamate (UMAG) in the biosynthesis of bacterial cell-wall peptidoglycan. This chain is UDP-N-acetylmuramoyl-L-alanyl-D-glutamate--2,6-diaminopimelate ligase, found in Mycobacterium bovis (strain ATCC BAA-935 / AF2122/97).